Reading from the N-terminus, the 274-residue chain is uncharacterized protein (274 aa).

An N-terminal signal peptide occupies residues 1 to 17; it reads MKKLLAGFLTLSLALAA. Residue Cys18 is the site of N-palmitoyl cysteine attachment. Residue Cys18 is the site of S-diacylglycerol cysteine attachment. The disordered stretch occupies residues 18–169; the sequence is CSNGSDDDSS…DANNGASSAN (152 aa). The segment covering 25–76 has biased composition (basic and acidic residues); that stretch reads DSSKKDDSSKDNQSSDDKSKDSKNDDKKNNDSDKDKDNNSDSDKNSDSKSDD. Low complexity predominate over residues 91–169; it reads SDNASGSDSS…DANNGASSAN (79 aa).

The protein resides in the cell membrane. This is an uncharacterized protein from Staphylococcus saprophyticus subsp. saprophyticus (strain ATCC 15305 / DSM 20229 / NCIMB 8711 / NCTC 7292 / S-41).